The sequence spans 61 residues: Small ribosomal subunit protein uS14 (61 aa).

Positions 24, 27, 40, and 43 each coordinate Zn(2+).

This sequence belongs to the universal ribosomal protein uS14 family. Zinc-binding uS14 subfamily. In terms of assembly, part of the 30S ribosomal subunit. Contacts proteins S3 and S10. Zn(2+) is required as a cofactor.

Binds 16S rRNA, required for the assembly of 30S particles and may also be responsible for determining the conformation of the 16S rRNA at the A site. The protein is Small ribosomal subunit protein uS14 of Natranaerobius thermophilus (strain ATCC BAA-1301 / DSM 18059 / JW/NM-WN-LF).